A 1018-amino-acid polypeptide reads, in one-letter code: Collagen, type I, alpha 1a (1018 aa).

Over residues 1 to 10 (QMSAGYDDKS) the composition is skewed to basic and acidic residues. Residues 1 to 991 (QMSAGYDDKS…SGEYWLDPDQ (991 aa)) are disordered. Residues 13 to 30 (MPVPGPMGPMGPRGPPGS) show a composition bias toward pro residues. Residues 31-58 (PGASGPQGFTGPPGEPGEAGPSGAMGPR) are compositionally biased toward low complexity. The segment covering 67 to 81 (NGEDGESGKPGRGGE) has biased composition (basic and acidic residues). A compositionally biased stretch (low complexity) spans 126-136 (PRGNDGAAGAA). The span at 138 to 151 (PPGPTGPAGPPGFP) shows a compositional bias: pro residues. Positions 152–170 (GGPGAKGDAGAQGGRGPEG) are enriched in gly residues. 2 stretches are compositionally biased toward low complexity: residues 171–214 (PAGA…AGAP) and 223–261 (SGPQ…APGV). The span at 284-296 (GARGGPGGRGFPG) shows a compositional bias: gly residues. Composition is skewed to low complexity over residues 370–385 (VGAR…PGPK), 424–442 (AGPA…PGFQ), 452–510 (LPGE…QGMP), and 543–558 (RGLT…AGAT). Positions 568–577 (GPVGPGGARG) are enriched in gly residues. 2 stretches are compositionally biased toward low complexity: residues 591-627 (AGFA…AGPT) and 641-663 (PKGA…AGRV). The segment covering 665 to 677 (PPGPSGNPGPPGP) has biased composition (pro residues). 2 stretches are compositionally biased toward low complexity: residues 701–746 (EVGA…XXPG) and 775–795 (PGLA…NEGS). A compositionally biased stretch (pro residues) spans 819 to 829 (APGPPGAPGPV). The span at 843-862 (PAGPAGSAGPAGPRGPAGAP) shows a compositional bias: low complexity. A compositionally biased stretch (basic and acidic residues) spans 865 to 876 (RGDKGESGEAGE). Positions 889–925 (SGSSGEQGPAGAAGPAGPRGPAGSAGSPGKDGMSGLP) are enriched in low complexity. The 87-residue stretch at 932-1018 (GPRGGFDLGF…CTSHTGTWGK (87 aa)) folds into the Fibrillar collagen NC1 domain. The segment covering 948 to 959 (KAPDPFRDRDLE) has biased composition (basic and acidic residues). Residues 963 to 973 (TLKSLSQQLEQ) show a composition bias toward polar residues.

It belongs to the fibrillar collagen family.

Its subcellular location is the secreted. It localises to the extracellular space. The protein resides in the extracellular matrix. The sequence is that of Collagen, type I, alpha 1a from Epinephelus costae (Goldblotch grouper).